We begin with the raw amino-acid sequence, 649 residues long: Macrolide export ATP-binding/permease protein MacB (649 aa).

In terms of domain architecture, ABC transporter spans 7–245 (IELKNIVRRY…SSAQEVTPQL (239 aa)). ATP is bound at residue 43–50 (GASGSGKS). 4 helical membrane-spanning segments follow: residues 276 to 296 (LLTM…IALG), 529 to 549 (IAFI…LVSV), 582 to 602 (LLGG…FSAF), and 612 to 632 (FSSF…FGYF).

Belongs to the ABC transporter superfamily. Macrolide exporter (TC 3.A.1.122) family. In terms of assembly, homodimer. Part of the tripartite efflux system MacAB-TolC, which is composed of an inner membrane transporter, MacB, a periplasmic membrane fusion protein, MacA, and an outer membrane component, TolC. The complex forms a large protein conduit and can translocate molecules across both the inner and outer membranes. Interacts with MacA.

The protein resides in the cell inner membrane. Part of the tripartite efflux system MacAB-TolC. MacB is a non-canonical ABC transporter that contains transmembrane domains (TMD), which form a pore in the inner membrane, and an ATP-binding domain (NBD), which is responsible for energy generation. Confers resistance against macrolides. The protein is Macrolide export ATP-binding/permease protein MacB of Pasteurella multocida (strain Pm70).